The following is a 284-amino-acid chain: Bifunctional protein FolD (284 aa).

Position 166–168 (166–168 (GAS)) interacts with NADP(+).

It belongs to the tetrahydrofolate dehydrogenase/cyclohydrolase family. In terms of assembly, homodimer.

The catalysed reaction is (6R)-5,10-methylene-5,6,7,8-tetrahydrofolate + NADP(+) = (6R)-5,10-methenyltetrahydrofolate + NADPH. It carries out the reaction (6R)-5,10-methenyltetrahydrofolate + H2O = (6R)-10-formyltetrahydrofolate + H(+). It functions in the pathway one-carbon metabolism; tetrahydrofolate interconversion. In terms of biological role, catalyzes the oxidation of 5,10-methylenetetrahydrofolate to 5,10-methenyltetrahydrofolate and then the hydrolysis of 5,10-methenyltetrahydrofolate to 10-formyltetrahydrofolate. This is Bifunctional protein FolD from Legionella pneumophila (strain Corby).